The primary structure comprises 423 residues: Probable sucrose-phosphate synthase (423 aa).

It belongs to the glycosyltransferase 1 family.

It catalyses the reaction beta-D-fructose 6-phosphate + UDP-alpha-D-glucose = sucrose 6(F)-phosphate + UDP + H(+). Plays a role in sucrose synthesis by catalyzing the first step of sucrose biosynthesis from UDP-glucose and fructose-6-phosphate. This is Probable sucrose-phosphate synthase from Thermosipho melanesiensis (strain DSM 12029 / CIP 104789 / BI429).